Here is a 945-residue protein sequence, read N- to C-terminus: Isoleucine--tRNA ligase (945 aa).

The 'HIGH' region signature appears at 66–76; it reads PYANGDIHLGH. Glu581 contacts L-isoleucyl-5'-AMP. The short motif at 622–626 is the 'KMSKS' region element; sequence KMSKS. An ATP-binding site is contributed by Lys625. Zn(2+) contacts are provided by Cys908, Cys911, Cys928, and Cys931.

It belongs to the class-I aminoacyl-tRNA synthetase family. IleS type 1 subfamily. Monomer. Zn(2+) is required as a cofactor.

The protein resides in the cytoplasm. It catalyses the reaction tRNA(Ile) + L-isoleucine + ATP = L-isoleucyl-tRNA(Ile) + AMP + diphosphate. Its function is as follows. Catalyzes the attachment of isoleucine to tRNA(Ile). As IleRS can inadvertently accommodate and process structurally similar amino acids such as valine, to avoid such errors it has two additional distinct tRNA(Ile)-dependent editing activities. One activity is designated as 'pretransfer' editing and involves the hydrolysis of activated Val-AMP. The other activity is designated 'posttransfer' editing and involves deacylation of mischarged Val-tRNA(Ile). In Paraburkholderia phymatum (strain DSM 17167 / CIP 108236 / LMG 21445 / STM815) (Burkholderia phymatum), this protein is Isoleucine--tRNA ligase.